A 194-amino-acid polypeptide reads, in one-letter code: Fimbrial protein 987P (194 aa).

The N-terminal stretch at 1-23 (MRMKKSALTLAVLSSLFSGYSLA) is a signal peptide. A disulfide bridge connects residues C46 and C85.

The protein belongs to the fimbrial protein family.

The protein localises to the fimbrium. The polypeptide is Fimbrial protein 987P (fasA) (Escherichia coli).